The chain runs to 157 residues: Nuclear cap-binding protein subunit 2 (157 aa).

Residues Tyr-17, Tyr-40, 109 to 113, 120 to 124, and 130 to 131 each bind mRNA; these read RADWD, RQYGR, and QV. In terms of domain architecture, RRM spans 37–115; sequence CTLYVGNLSY…RVIRADWDAG (79 aa).

Belongs to the RRM NCBP2 family. In terms of assembly, component of the nuclear cap-binding complex (CBC), a heterodimer composed of ncbp-1 and ncbp-2 that interacts with m7GpppG-capped RNA.

It localises to the nucleus. In terms of biological role, component of the cap-binding complex (CBC), which binds co-transcriptionally to the 5' cap of pre-mRNAs and is involved in various processes such as pre-mRNA splicing and RNA-mediated gene silencing (RNAi). The CBC complex is involved in miRNA-mediated RNA interference and is required for primary microRNAs (miRNAs) processing. In the CBC complex, ncbp-2 recognizes and binds capped RNAs (m7GpppG-capped RNA) but requires ncbp-1 to stabilize the movement of its N-terminal loop and lock the CBC into a high affinity cap-binding state with the cap structure. In Caenorhabditis briggsae, this protein is Nuclear cap-binding protein subunit 2 (ncbp-2).